The primary structure comprises 332 residues: Large ribosomal subunit protein uL10 (332 aa).

The segment at 294-332 (QAAAAPVAVEDNTEEPEEEEEEEEDAAESAAAGLGALFG) is disordered. The segment covering 304–320 (DNTEEPEEEEEEEEDAA) has biased composition (acidic residues).

The protein belongs to the universal ribosomal protein uL10 family. As to quaternary structure, part of the 50S ribosomal subunit. Forms part of the ribosomal stalk which helps the ribosome interact with GTP-bound translation factors. Forms a heptameric L10(L12)2(L12)2(L12)2 complex, where L10 forms an elongated spine to which the L12 dimers bind in a sequential fashion.

Forms part of the ribosomal stalk, playing a central role in the interaction of the ribosome with GTP-bound translation factors. This chain is Large ribosomal subunit protein uL10, found in Methanosphaera stadtmanae (strain ATCC 43021 / DSM 3091 / JCM 11832 / MCB-3).